Consider the following 138-residue polypeptide: Small ribosomal subunit protein uS11c (138 aa).

This sequence belongs to the universal ribosomal protein uS11 family. Part of the 30S ribosomal subunit.

The protein localises to the plastid. Its subcellular location is the chloroplast. The polypeptide is Small ribosomal subunit protein uS11c (Illicium oligandrum (Star anise)).